The primary structure comprises 245 residues: Ribonuclease PH (245 aa).

Residues R93 and G131 to R133 each bind phosphate.

It belongs to the RNase PH family. Homohexameric ring arranged as a trimer of dimers.

The catalysed reaction is tRNA(n+1) + phosphate = tRNA(n) + a ribonucleoside 5'-diphosphate. Phosphorolytic 3'-5' exoribonuclease that plays an important role in tRNA 3'-end maturation. Removes nucleotide residues following the 3'-CCA terminus of tRNAs; can also add nucleotides to the ends of RNA molecules by using nucleoside diphosphates as substrates, but this may not be physiologically important. Probably plays a role in initiation of 16S rRNA degradation (leading to ribosome degradation) during starvation. This is Ribonuclease PH from Corynebacterium glutamicum (strain R).